The chain runs to 222 residues: Nucleoside triphosphate pyrophosphatase (222 aa).

The Proton acceptor role is filled by Asp-82.

Belongs to the Maf family. A divalent metal cation serves as cofactor.

It localises to the cytoplasm. The catalysed reaction is a ribonucleoside 5'-triphosphate + H2O = a ribonucleoside 5'-phosphate + diphosphate + H(+). It carries out the reaction a 2'-deoxyribonucleoside 5'-triphosphate + H2O = a 2'-deoxyribonucleoside 5'-phosphate + diphosphate + H(+). Nucleoside triphosphate pyrophosphatase. May have a dual role in cell division arrest and in preventing the incorporation of modified nucleotides into cellular nucleic acids. The sequence is that of Nucleoside triphosphate pyrophosphatase from Mycobacterium bovis (strain ATCC BAA-935 / AF2122/97).